We begin with the raw amino-acid sequence, 433 residues long: Pyroglutamylated RF-amide peptide receptor (433 aa).

At 1 to 46 (MQALNITAEQFSRLLSAHNLTREQFIHRYGLRPLVYTPELPARAKV) the chain is on the extracellular side. N-linked (GlcNAc...) asparagine glycosylation is found at Asn-5 and Asn-19. A helical membrane pass occupies residues 47–67 (AFALAGALIFALALFGNSLVI). Topologically, residues 68–81 (YVVTRSKAMRTVTN) are cytoplasmic. A helical transmembrane segment spans residues 82-102 (IFICSLALSDLLIAFFCIPVT). At 103–120 (MLQNISDKWLGGAFICKM) the chain is on the extracellular side. Residues 121–141 (VPFVQSTAVVTEILTMTCIAV) form a helical membrane-spanning segment. Residues 142 to 162 (ERHQGLVHPFKMKWQYTTRRA) are Cytoplasmic-facing. The helical transmembrane segment at 163–183 (FTILGVVWLAAIIVGSPMWHV) threads the bilayer. The Extracellular segment spans residues 184 to 212 (QRLEIKYDFLYEKEHICCLEEWASPVHQR). The chain crosses the membrane as a helical span at residues 213–233 (IYSTFILVILFLLPLVVMLVL). Topologically, residues 234–271 (YSKIGYELWIKKRVGDSSALQTIHGKEMSKIARKKKRA) are cytoplasmic. The chain crosses the membrane as a helical span at residues 272–292 (VIMMVTVVALFAACWAPFHVV). Topologically, residues 293–313 (HMMVEYSNFEKEYDDVTIKMV) are extracellular. The chain crosses the membrane as a helical span at residues 314–334 (FAVAQTIGFFNSICNPFVYAF). At 335–433 (MNENFKKNFL…NSTFGSGHEL (99 aa)) the chain is on the cytoplasmic side. Residues 356–389 (SSPARKPGNSGISMMQKRAKLSRPQRPVEETKGD) are disordered.

The protein belongs to the G-protein coupled receptor 1 family. In terms of tissue distribution, highly expressed in the adrenal gland and at moderate levels in the eye and testis. Expressed widely in the brain with high levels in the hypothalamus and moderate levels in the amygdala, basal forebrain, cortex, medulla oblongata, midbrain and thalamus.

It is found in the cell membrane. In terms of biological role, receptor for the orexigenic neuropeptide QRFP. The activity of this receptor is mediated by G proteins that modulate adenylate cyclase activity and intracellular calcium levels. This is Pyroglutamylated RF-amide peptide receptor (Qrfpr) from Rattus norvegicus (Rat).